Reading from the N-terminus, the 35-residue chain is Kappa-theraphotoxin-Gr1b (35 aa).

Cystine bridges form between Cys2-Cys16, Cys9-Cys21, and Cys15-Cys28. The involved in active face stretch occupies residues Tyr4–Phe6.

This sequence belongs to the neurotoxin 10 (Hwtx-1) family. 09 (HaTx) subfamily. In terms of tissue distribution, expressed by the venom gland.

It is found in the secreted. In terms of biological role, inhibitor of voltage-gated potassium channels. Inhibits Kv2.1/KCNB1 channels, by shifting activation of the channel to more depolarized voltages. The toxin binding sites may be situated on the S3-S4 extracellular linker of the channel. One, two, three or four toxin molecules may bind the Kv2.1/KCNB1 channel. May need to partition into the membrane in order to bind to the channel. Antibacterial activity is not observed. This is Kappa-theraphotoxin-Gr1b from Grammostola rosea (Chilean rose tarantula).